The following is a 629-amino-acid chain: MFYTENYDVIVIGGGHAGTEAALAPARMGLKTLLLTHNVDTLGQMSCNPAIGGIGKGHLVREIDAMGGLMATAADQAGIQFRTLNSSKGPAVRATRAQADRVLYRQAVRIALENQENLDIFQQEVTDIILDQDRVCGVVTKMGLKFHAKAVILTAGTFLSGKIHIGLENYTGGRAGDPASVMLADRLRELNLRVDRLKTGTPPRIDARTIDFSVLAKQHGDEKLPVFSFMGSVDQHPRQIPCFITHTNEQTHEVIRNNLDRSPMYAGIIEGIGPRYCPSIEDKVMRFSERNSHQIYLEPEGLTSNEIYPNGISTSLPFDVQMKIVNSMKGMEKARIIKPGYAIEYDYFDPRDLKPTLETKSIRGLFFAGQINGTTGYEEAAGQGLLAGINAGLFVQEKEAWFPRRDQAYIGVLVDDLCTLGTKEPYRVFTSRAEYRLLLREDNADSRLTPIAHQLGLIDEKRWARFNQKMENIELERQRLRQIWLHPRSEYLDEANKVLGSPLVREASGEDLLRRPEMNYQILTSLTPFQPAMDDQEAVEQVEIAIKYQGYIEHQQEEIARQKRHESTAIPAHFDYTVVSGLSNEVRAKLEQHRPVSIGQASRISGVTPAAISILLVSLKKQGMLKRGE.

Residues 13-18 (GGGHAG), V125, and S180 contribute to the FAD site. 273 to 287 (GPRYCPSIEDKVMRF) contributes to the NAD(+) binding site. Q370 contributes to the FAD binding site.

This sequence belongs to the MnmG family. Homodimer. Heterotetramer of two MnmE and two MnmG subunits. It depends on FAD as a cofactor.

It is found in the cytoplasm. Its function is as follows. NAD-binding protein involved in the addition of a carboxymethylaminomethyl (cmnm) group at the wobble position (U34) of certain tRNAs, forming tRNA-cmnm(5)s(2)U34. The sequence is that of tRNA uridine 5-carboxymethylaminomethyl modification enzyme MnmG from Pasteurella multocida (strain Pm70).